We begin with the raw amino-acid sequence, 255 residues long: Glucanase inhibitor protein 4 (255 aa).

The first 21 residues, 1-21, serve as a signal peptide directing secretion; sequence MKSITTASFALILFGVGAASA. A Peptidase S1 domain is found at 29-255; sequence VLGGGAVPSG…ESLGMDQLGH (227 aa). A disulfide bond links cysteine 56 and cysteine 72. 4 N-linked (GlcNAc...) asparagine glycosylation sites follow: asparagine 90, asparagine 105, asparagine 110, and asparagine 160. 2 disulfides stabilise this stretch: cysteine 180–cysteine 192 and cysteine 202–cysteine 235.

The protein belongs to the peptidase S1 family. Forms an apoplastic complex with host endoglucanases in tomato leaves during P.infestans infection.

It is found in the secreted. Its function is as follows. Secreted effector that suppresses host plant glucan elicitor-mediated defense responses. Targets host endoglucanases and inhibits the endoglucanase-mediated release of elicitor-active glucan oligosaccharides from P.infestans cell walls. The sequence is that of Glucanase inhibitor protein 4 from Phytophthora infestans (Potato late blight agent).